We begin with the raw amino-acid sequence, 502 residues long: Aspartyl/glutamyl-tRNA(Asn/Gln) amidotransferase subunit B (502 aa).

It belongs to the GatB/GatE family. GatB subfamily. Heterotrimer of A, B and C subunits.

The enzyme catalyses L-glutamyl-tRNA(Gln) + L-glutamine + ATP + H2O = L-glutaminyl-tRNA(Gln) + L-glutamate + ADP + phosphate + H(+). It catalyses the reaction L-aspartyl-tRNA(Asn) + L-glutamine + ATP + H2O = L-asparaginyl-tRNA(Asn) + L-glutamate + ADP + phosphate + 2 H(+). Its function is as follows. Allows the formation of correctly charged Asn-tRNA(Asn) or Gln-tRNA(Gln) through the transamidation of misacylated Asp-tRNA(Asn) or Glu-tRNA(Gln) in organisms which lack either or both of asparaginyl-tRNA or glutaminyl-tRNA synthetases. The reaction takes place in the presence of glutamine and ATP through an activated phospho-Asp-tRNA(Asn) or phospho-Glu-tRNA(Gln). This Arthrobacter sp. (strain FB24) protein is Aspartyl/glutamyl-tRNA(Asn/Gln) amidotransferase subunit B.